Consider the following 388-residue polypeptide: Staphopain A (388 aa).

The signal sequence occupies residues 1–25 (MKRNFPKLIALSLIFSLSVTPIANA). Positions 26–214 (ESNSNIKAKD…TSQFKSNNYT (189 aa)) are excised as a propeptide. Catalysis depends on residues C238, H334, and N355.

The protein belongs to the peptidase C47 family. As to quaternary structure, in the cytoplasm, prematurely activated/folded ScpA forms a stable non-covalent complex with ScpB. Cleavage leads to the activation of ScpA probably by an auto-catalytic manner.

The protein resides in the secreted. It carries out the reaction Broad endopeptidase action on proteins including elastin, but rather limited hydrolysis of small-molecule substrates. Assays are conveniently made with hemoglobin, casein or Z-Phe-Arg-NHMec as substrate.. With respect to regulation, prematurely activated/folded staphopain A is inhibited by staphostatin A (ScpB), which is probably required to protect staphylococcal cytoplasmic proteins from degradation by ScpA. Functionally, cysteine protease that plays an important role in the inhibition of host innate immune response. Cleaves host elastins found in connective tissues, pulmonary surfactant protein A in the lungs, and the chemokine receptor CXCR2 on leukocytes. Proteolytic cleavage of surfactant protein A impairs bacterial phagocytosis by neutrophils while CXCR2 degradation blocks neutrophil activation and chemotaxis. Additionally, promotes vascular leakage by activating the plasma kallikerin/kinin system, resulting in hypotension. In Staphylococcus aureus (strain COL), this protein is Staphopain A (sspP).